Consider the following 188-residue polypeptide: CyanoP (188 aa).

A signal peptide spans 1 to 23; the sequence is MLKKSLSTAVVLVTLLLSFTLTA. The N-palmitoyl cysteine moiety is linked to residue Cys24. The S-diacylglycerol cysteine moiety is linked to residue Cys24.

Belongs to the PsbP family. CyanoP subfamily. As to quaternary structure, monomer. Present in about 3% of photosystem II (PSII) preparations. Purifies with partially assembled PSII complexes, in addition to a small amount of monomeric and dimeric PSII, and trimeric PSI.

Its subcellular location is the cellular thylakoid membrane. Plays a role in the early stages of photosystem II (PSII) assembly; binds to D2 (psbD) and may facilitate its incorporation into PSII. Required for optimal photoautotrophic growth in the absence of Ca(2+) or Cl(-), functions in optimizing PSII water oxidation/O(2) evolving activity. Might be involved in assembly of the oxygen evolving complex. This chain is CyanoP, found in Synechocystis sp. (strain ATCC 27184 / PCC 6803 / Kazusa).